The following is a 492-amino-acid chain: Histone-lysine N-methyltransferase SUVR4 (492 aa).

Residues 112–138 (ETRSASSGSSIQVVQKQPQLSNGDRKR) are disordered. A compositionally biased stretch (polar residues) spans 113–133 (TRSASSGSSIQVVQKQPQLSN). Residues cysteine 196, cysteine 197, cysteine 200, cysteine 204, cysteine 213, cysteine 281, cysteine 285, cysteine 287, and cysteine 291 each contribute to the Zn(2+) site. The Pre-SET domain maps to 196–299 (CCANCKGNCL…QCGNRVVQRG (104 aa)). An SET domain is found at 302-435 (CQLQVYFTQE…AMDELTWDYM (134 aa)). Residues 313–315 (KGW) and 391–392 (NH) each bind S-adenosyl-L-methionine. Cysteine 394 serves as a coordination point for Zn(2+). Tyrosine 434 is a binding site for S-adenosyl-L-methionine. Residues 446 to 462 (KAFRCCCGSESCRDRKI) form the Post-SET domain. The Zn(2+) site is built by cysteine 450, cysteine 452, and cysteine 457. A disordered region spans residues 463–492 (KGSQGKSIERRKIVSAKKQQGSKEVSKKRK).

It belongs to the class V-like SAM-binding methyltransferase superfamily. Histone-lysine methyltransferase family. As to quaternary structure, interacts with ubiquitin.

Its subcellular location is the nucleus. It localises to the chromosome. It catalyses the reaction N(6)-methyl-L-lysyl(9)-[histone H3] + S-adenosyl-L-methionine = N(6),N(6)-dimethyl-L-lysyl(9)-[histone H3] + S-adenosyl-L-homocysteine + H(+). The enzyme catalyses N(6),N(6)-dimethyl-L-lysyl(9)-[histone H3] + S-adenosyl-L-methionine = N(6),N(6),N(6)-trimethyl-L-lysyl(9)-[histone H3] + S-adenosyl-L-homocysteine + H(+). Functionally, histone methyltransferase that converts monomethylated 'Lys-9' of histone H3 (H3K9me1) to dimethylated 'Lys-9' (H3K9me2) in the absence of bound ubiquitin, and to trimethylated 'Lys-9' (H3K9me3) in the presence of bound ubiquitin. Acts in a locus-specific manner and contributes to the transcriptional silencing of pseudogenes and transposons. H3 'Lys-9' methylation represents a specific tag for epigenetic transcriptional repression. This chain is Histone-lysine N-methyltransferase SUVR4 (SUVR4), found in Arabidopsis thaliana (Mouse-ear cress).